The chain runs to 156 residues: Ribonuclease H (156 aa).

Positions 2-144 (TMKNVQAFTD…CDVLARTQAS (143 aa)) constitute an RNase H type-1 domain. 4 residues coordinate Mg(2+): D11, E49, D71, and D136.

It belongs to the RNase H family. Monomer. It depends on Mg(2+) as a cofactor.

It localises to the cytoplasm. The enzyme catalyses Endonucleolytic cleavage to 5'-phosphomonoester.. Its function is as follows. Endonuclease that specifically degrades the RNA of RNA-DNA hybrids. The protein is Ribonuclease H of Nitratidesulfovibrio vulgaris (strain DSM 19637 / Miyazaki F) (Desulfovibrio vulgaris).